Reading from the N-terminus, the 338-residue chain is tRNA N6-adenosine threonylcarbamoyltransferase (338 aa).

Residues H114 and H118 each contribute to the Fe cation site. Substrate is bound by residues 137–141 (IVSGG), D170, G183, D187, and N277. Residue D305 coordinates Fe cation.

It belongs to the KAE1 / TsaD family. The cofactor is Fe(2+).

It is found in the cytoplasm. The catalysed reaction is L-threonylcarbamoyladenylate + adenosine(37) in tRNA = N(6)-L-threonylcarbamoyladenosine(37) in tRNA + AMP + H(+). Its function is as follows. Required for the formation of a threonylcarbamoyl group on adenosine at position 37 (t(6)A37) in tRNAs that read codons beginning with adenine. Is involved in the transfer of the threonylcarbamoyl moiety of threonylcarbamoyl-AMP (TC-AMP) to the N6 group of A37, together with TsaE and TsaB. TsaD likely plays a direct catalytic role in this reaction. The sequence is that of tRNA N6-adenosine threonylcarbamoyltransferase from Clostridioides difficile (strain 630) (Peptoclostridium difficile).